The following is a 265-amino-acid chain: Imidazole glycerol phosphate synthase subunit HisF (265 aa).

Active-site residues include Asp17 and Asp136.

It belongs to the HisA/HisF family. Heterodimer of HisH and HisF.

It is found in the cytoplasm. It carries out the reaction 5-[(5-phospho-1-deoxy-D-ribulos-1-ylimino)methylamino]-1-(5-phospho-beta-D-ribosyl)imidazole-4-carboxamide + L-glutamine = D-erythro-1-(imidazol-4-yl)glycerol 3-phosphate + 5-amino-1-(5-phospho-beta-D-ribosyl)imidazole-4-carboxamide + L-glutamate + H(+). Its pathway is amino-acid biosynthesis; L-histidine biosynthesis; L-histidine from 5-phospho-alpha-D-ribose 1-diphosphate: step 5/9. Functionally, IGPS catalyzes the conversion of PRFAR and glutamine to IGP, AICAR and glutamate. The HisF subunit catalyzes the cyclization activity that produces IGP and AICAR from PRFAR using the ammonia provided by the HisH subunit. The polypeptide is Imidazole glycerol phosphate synthase subunit HisF (Mycobacterium avium (strain 104)).